Here is a 388-residue protein sequence, read N- to C-terminus: Amylovoran biosynthesis protein AmsL (388 aa).

The next 6 helical transmembrane spans lie at 24–44, 47–67, 97–117, 231–251, 297–317, and 359–379; these read VLLS…ISWF, LPQL…LGSL, FTVI…LGLF, FVIM…SPVI, FYWN…VWIW, and ISVS…NLFI.

The protein belongs to the polysaccharide synthase family.

It localises to the cell membrane. The protein operates within glycan metabolism; exopolysaccharide biosynthesis. Functionally, involved in the biosynthesis of amylovoran which functions as a virulence factor. The sequence is that of Amylovoran biosynthesis protein AmsL (amsL) from Erwinia amylovora (Fire blight bacteria).